Here is a 557-residue protein sequence, read N- to C-terminus: Hepatocyte nuclear factor 1-beta (557 aa).

The segment at 1 to 31 is dimerization; it reads MVSKLTSLQQELLSALLSSGVTKEVLIQALE. Residues 1 to 32 enclose the HNF-p1 domain; it reads MVSKLTSLQQELLSALLSSGVTKEVLIQALEE. A phosphoserine mark is found at Ser-49, Ser-52, Ser-75, and Ser-80. Residues 66–85 form a disordered region; the sequence is TNGHAKGRLSGDEGSEDGDD. The POU-specific atypical domain maps to 93-188; sequence KELQALNTEE…ILRQFNQTVQ (96 aa). A DNA-binding region (homeobox; HNF1-type) is located at residues 231-311; it reads MRRNRFKWGP…NRRKEEAFRQ (81 aa). Positions 324-370 are disordered; sequence HNLNPLLTHGSPHHQPSSSPPNKLSGVRYSQPGNNEVTSSSTISHHG. Over residues 354-370 the composition is skewed to polar residues; the sequence is QPGNNEVTSSSTISHHG.

The protein belongs to the HNF1 homeobox family. As to quaternary structure, binds DNA as a dimer. Can form homodimer or heterodimer with HNF1-alpha. Interacts (via HNF-p1 domain) with PCBD1; the interaction increases its transactivation activity. Liver, kidney and intestine.

It localises to the nucleus. In terms of biological role, transcription factor that binds to the inverted palindrome 5'-GTTAATNATTAAC-3'. Binds to the FPC element in the cAMP regulatory unit of the PLAU gene. Transcriptional activity is increased by coactivator PCBD1. The sequence is that of Hepatocyte nuclear factor 1-beta (Hnf1b) from Rattus norvegicus (Rat).